Consider the following 825-residue polypeptide: Tuftelin-interacting protein 11 (825 aa).

Residues 1 to 135 form a disordered region; the sequence is MSMSHLYGKD…RTFAGGIKSN (135 aa). A compositionally biased stretch (acidic residues) spans 11–25; that stretch reads EDSDGVEMENFEITD. 2 stretches are compositionally biased toward basic and acidic residues: residues 41 to 61 and 85 to 114; these read QTKEEATYGMWAERDSDDERP and PAAEEKSDSDSDSETQARRETFPKDFEAKK. Positions 122-135 are enriched in polar residues; that stretch reads KPSQRTFAGGIKSN. A G-patch domain is found at 145 to 191; sequence TKGIGQKLLQKMGYVQGRGLGKNAQGIIAPIEAKQRKGKGAVGAYGS.

The protein belongs to the TFP11/STIP family. Identified in the spliceosome C complex.

The protein resides in the nucleus. Functionally, involved in pre-mRNA splicing, specifically in spliceosome disassembly during late-stage splicing events. The polypeptide is Tuftelin-interacting protein 11 (tfip11) (Xenopus tropicalis (Western clawed frog)).